Here is a 231-residue protein sequence, read N- to C-terminus: Flagellar L-ring protein (231 aa).

The first 18 residues, Met-1 to Gly-18, serve as a signal peptide directing secretion. A lipid anchor (N-palmitoyl cysteine) is attached at Cys-19. Cys-19 carries S-diacylglycerol cysteine lipidation.

This sequence belongs to the FlgH family. The basal body constitutes a major portion of the flagellar organelle and consists of four rings (L,P,S, and M) mounted on a central rod.

It is found in the cell outer membrane. The protein resides in the bacterial flagellum basal body. Functionally, assembles around the rod to form the L-ring and probably protects the motor/basal body from shearing forces during rotation. In Stutzerimonas stutzeri (strain A1501) (Pseudomonas stutzeri), this protein is Flagellar L-ring protein.